Consider the following 164-residue polypeptide: Protein 4 (164 aa).

This is Protein 4 from Lettuce big-vein associated virus (isolate Japan/Kagawa) (LBVaV).